A 307-amino-acid chain; its full sequence is Ribonuclease Z (307 aa).

7 residues coordinate Zn(2+): His-63, His-65, Asp-67, His-68, His-140, Asp-211, and His-269. The Proton acceptor role is filled by Asp-67.

It belongs to the RNase Z family. In terms of assembly, homodimer. It depends on Zn(2+) as a cofactor.

It carries out the reaction Endonucleolytic cleavage of RNA, removing extra 3' nucleotides from tRNA precursor, generating 3' termini of tRNAs. A 3'-hydroxy group is left at the tRNA terminus and a 5'-phosphoryl group is left at the trailer molecule.. Zinc phosphodiesterase, which displays some tRNA 3'-processing endonuclease activity. Probably involved in tRNA maturation, by removing a 3'-trailer from precursor tRNA. The protein is Ribonuclease Z of Bacillus subtilis (strain 168).